The chain runs to 219 residues: 7-cyano-7-deazaguanine synthase (219 aa).

An ATP-binding site is contributed by 8–18; the sequence is LSGGMDSAVLL. Residues cysteine 185, cysteine 193, cysteine 196, and cysteine 199 each coordinate Zn(2+).

It belongs to the QueC family. The cofactor is Zn(2+).

It catalyses the reaction 7-carboxy-7-deazaguanine + NH4(+) + ATP = 7-cyano-7-deazaguanine + ADP + phosphate + H2O + H(+). It participates in purine metabolism; 7-cyano-7-deazaguanine biosynthesis. Functionally, catalyzes the ATP-dependent conversion of 7-carboxy-7-deazaguanine (CDG) to 7-cyano-7-deazaguanine (preQ(0)). The chain is 7-cyano-7-deazaguanine synthase from Desulfotalea psychrophila (strain LSv54 / DSM 12343).